Reading from the N-terminus, the 507-residue chain is ATP synthase subunit alpha, chloroplastic (507 aa).

ATP is bound at residue 170-177 (GDRQTGKT).

The protein belongs to the ATPase alpha/beta chains family. F-type ATPases have 2 components, CF(1) - the catalytic core - and CF(0) - the membrane proton channel. CF(1) has five subunits: alpha(3), beta(3), gamma(1), delta(1), epsilon(1). CF(0) has four main subunits: a, b, b' and c.

The protein localises to the plastid. It is found in the chloroplast thylakoid membrane. The enzyme catalyses ATP + H2O + 4 H(+)(in) = ADP + phosphate + 5 H(+)(out). Its function is as follows. Produces ATP from ADP in the presence of a proton gradient across the membrane. The alpha chain is a regulatory subunit. This Oenothera glazioviana (Large-flowered evening primrose) protein is ATP synthase subunit alpha, chloroplastic.